We begin with the raw amino-acid sequence, 115 residues long: Peptidyl-tRNA hydrolase (115 aa).

This sequence belongs to the PTH2 family.

The protein localises to the cytoplasm. The enzyme catalyses an N-acyl-L-alpha-aminoacyl-tRNA + H2O = an N-acyl-L-amino acid + a tRNA + H(+). The natural substrate for this enzyme may be peptidyl-tRNAs which drop off the ribosome during protein synthesis. This Methanococcoides burtonii (strain DSM 6242 / NBRC 107633 / OCM 468 / ACE-M) protein is Peptidyl-tRNA hydrolase.